Consider the following 150-residue polypeptide: Photosystem II extrinsic protein V (150 aa).

The first 20 residues, 1 to 20 (MIRVIMLLVLVWMTPMISWA), serve as a signal peptide directing secretion. Residues C50, C53, H54, and H105 each coordinate heme c.

Belongs to the cytochrome c family. PsbV subfamily. As to quaternary structure, PSII is composed of 1 copy each of membrane proteins PsbA, PsbB, PsbC, PsbD, PsbE, PsbF, PsbH, PsbI, PsbJ, PsbK, PsbL, PsbM, PsbT, PsbY, PsbZ, Psb30/Ycf12, at least 3 peripheral proteins of the oxygen-evolving complex and a large number of cofactors. It forms dimeric complexes. The extrinsic subunits in red algae are PsbO (OEC33), PsbQ', cytochrome c-550 and PsbU. The cofactor is heme c.

Its subcellular location is the plastid. The protein resides in the chloroplast thylakoid membrane. One of the extrinsic, lumenal subunits of photosystem II (PSII). PSII is a light-driven water plastoquinone oxidoreductase, using light energy to abstract electrons from H(2)O, generating a proton gradient subsequently used for ATP formation. The extrinsic proteins stabilize the structure of photosystem II oxygen-evolving complex (OEC), the ion environment of oxygen evolution and protect the OEC against heat-induced inactivation. In Cyanidioschyzon merolae (strain NIES-3377 / 10D) (Unicellular red alga), this protein is Photosystem II extrinsic protein V.